Reading from the N-terminus, the 445-residue chain is Putative H/ACA ribonucleoprotein complex subunit 4 (445 aa).

The disordered stretch occupies residues methionine 1–threonine 32. A compositionally biased stretch (polar residues) spans glutamine 20 to threonine 32. Aspartate 113 acts as the Nucleophile in catalysis. Positions histidine 284 to methionine 359 constitute a PUA domain. The segment at leucine 386–aspartate 445 is disordered.

The protein belongs to the pseudouridine synthase TruB family. In terms of assembly, component of the small nucleolar ribonucleoprotein particle containing H/ACA-type snoRNAs (H/ACA snoRNPs).

The protein resides in the nucleus. The protein localises to the nucleolus. The catalysed reaction is a uridine in RNA = a pseudouridine in RNA. In terms of biological role, plays a central role in ribosomal RNA processing. Probable catalytic subunit of H/ACA small nucleolar ribonucleoprotein (H/ACA snoRNP) complex, which catalyzes pseudouridylation of rRNA. This involves the isomerization of uridine such that the ribose is subsequently attached to C5, instead of the normal N1. Pseudouridine ('psi') residues may serve to stabilize the conformation of rRNAs. This Caenorhabditis elegans protein is Putative H/ACA ribonucleoprotein complex subunit 4.